The sequence spans 298 residues: Tyrosine recombinase XerC (298 aa).

The Core-binding (CB) domain occupies 1-84 (MNHIQEAFLN…TLRTFYEYWM (84 aa)). One can recognise a Tyr recombinase domain in the interval 105–286 (YLPQFFYEEE…SNQQLRKVYL (182 aa)). Catalysis depends on residues R145, K169, H238, R241, and H264. Y273 acts as the O-(3'-phospho-DNA)-tyrosine intermediate in catalysis.

This sequence belongs to the 'phage' integrase family. XerC subfamily. As to quaternary structure, forms a cyclic heterotetrameric complex composed of two molecules of XerC and two molecules of XerD.

It localises to the cytoplasm. Site-specific tyrosine recombinase, which acts by catalyzing the cutting and rejoining of the recombining DNA molecules. The XerC-XerD complex is essential to convert dimers of the bacterial chromosome into monomers to permit their segregation at cell division. It also contributes to the segregational stability of plasmids. In Staphylococcus aureus (strain MRSA252), this protein is Tyrosine recombinase XerC.